The chain runs to 383 residues: tRNA-specific 2-thiouridylase MnmA (383 aa).

Residues 9 to 16 (GMSGGVDS) and Met35 each bind ATP. Positions 95 to 97 (NPD) are interaction with target base in tRNA. Cys100 functions as the Nucleophile in the catalytic mechanism. Cys100 and Cys196 are oxidised to a cystine. Gly124 lines the ATP pocket. The interval 146 to 148 (KDQ) is interaction with tRNA. Catalysis depends on Cys196, which acts as the Cysteine persulfide intermediate. The segment at 308-309 (RY) is interaction with tRNA.

It belongs to the MnmA/TRMU family.

It is found in the cytoplasm. It carries out the reaction S-sulfanyl-L-cysteinyl-[protein] + uridine(34) in tRNA + AH2 + ATP = 2-thiouridine(34) in tRNA + L-cysteinyl-[protein] + A + AMP + diphosphate + H(+). Functionally, catalyzes the 2-thiolation of uridine at the wobble position (U34) of tRNA, leading to the formation of s(2)U34. This chain is tRNA-specific 2-thiouridylase MnmA, found in Burkholderia lata (strain ATCC 17760 / DSM 23089 / LMG 22485 / NCIMB 9086 / R18194 / 383).